Reading from the N-terminus, the 397-residue chain is Growth-regulating factor 1 (397 aa).

The QLQ domain maps to 18–53 (PFTASQWQELEHQALIYKYMASGTPIPSDLILPLRR). Short sequence motifs (bipartite nuclear localization signal) lie at residues 86–105 (RKAE…KKWR) and 123–130 (RGKNRSRK). Residues 90-134 (DPEPGRCRRTDGKKWRCSKEAYPDSKYCEKHMHRGKNRSRKPVEM) enclose the WRC domain. Residues 117–176 (CEKHMHRGKNRSRKPVEMSLATPPPPSSSATSAASNTSAGVAPTTTTTSSPAPSYSRPAP) are disordered. Residues 120–129 (HMHRGKNRSR) show a composition bias toward basic residues. Residues 144–174 (SSATSAASNTSAGVAPTTTTTSSPAPSYSRP) show a composition bias toward low complexity.

It belongs to the GRF family.

Its subcellular location is the nucleus. In terms of biological role, transcription activator that plays a regulatory role in gibberellin-induced stem elongation. The sequence is that of Growth-regulating factor 1 (GRF1) from Oryza sativa subsp. japonica (Rice).